We begin with the raw amino-acid sequence, 230 residues long: ATP synthase subunit a (230 aa).

The next 6 helical transmembrane spans lie at Ala-26–Ala-46, Phe-83–Ile-103, Asn-112–Ile-132, Phe-143–Leu-163, Leu-182–Met-202, and Gly-203–Gln-223.

It belongs to the ATPase A chain family. In terms of assembly, F-type ATPases have 2 components, CF(1) - the catalytic core - and CF(0) - the membrane proton channel. CF(1) has five subunits: alpha(3), beta(3), gamma(1), delta(1), epsilon(1). CF(0) has three main subunits: a(1), b(2) and c(9-12). The alpha and beta chains form an alternating ring which encloses part of the gamma chain. CF(1) is attached to CF(0) by a central stalk formed by the gamma and epsilon chains, while a peripheral stalk is formed by the delta and b chains.

Its subcellular location is the cell inner membrane. In terms of biological role, key component of the proton channel; it plays a direct role in the translocation of protons across the membrane. The protein is ATP synthase subunit a of Trichlorobacter lovleyi (strain ATCC BAA-1151 / DSM 17278 / SZ) (Geobacter lovleyi).